We begin with the raw amino-acid sequence, 309 residues long: Eugenol synthase 2 (309 aa).

NADP(+) is bound by residues 13-16 (TGYI), 35-45 (VRETTVSDPVK), Arg-36, 86-88 (FMQ), 111-113 (SEF), Lys-134, and 154-156 (NCF). Catalysis depends on Lys-134, which acts as the Proton donor/acceptor.

This sequence belongs to the NmrA-type oxidoreductase family. As to expression, mostly expressed in petals, and, to a lower extent, in sepals, stamens and pistils.

The enzyme catalyses eugenol + a carboxylate + NADP(+) = a coniferyl ester + NADPH. It catalyses the reaction eugenol + acetate + NADP(+) = (E)-coniferyl acetate + NADPH. The protein operates within aromatic compound metabolism; phenylpropanoid biosynthesis. Catalyzes the synthesis of the phenylpropene eugenol from coniferyl acetate. Phenylpropenes are produced by plants as defense compounds with antimicrobial and antianimal properties, or as floral attractants of pollinators. The protein is Eugenol synthase 2 of Clarkia breweri (Fairy fans).